A 340-amino-acid chain; its full sequence is DNA repair protein RAD51 homolog A (340 aa).

A compositionally biased stretch (low complexity) spans 1–14 (MSSAAQQQQKAAAA). The segment at 1–21 (MSSAAQQQQKAAAAEQEEVEH) is disordered. Positions 49–78 (TVEAVAYTPRKDLLQIKGISEAKADKIIEA) constitute a HhH domain. 128–135 (GEFRSGKT) contributes to the ATP binding site.

Belongs to the RecA family. RAD51 subfamily. In terms of assembly, self-associates and may interact with XRCC3 homolog. Highly expressed in mitotic and meiotic tissues, but low levels in differentiated tissues.

Its subcellular location is the nucleus. Its function is as follows. Binds to single and double-stranded DNA and exhibits DNA-dependent ATPase activity. Unwinds duplex DNA. Component of the meiotic recombination pathway. Seems to play a role in mediating chromosome homology search, chromosome pairing and synapsis at early stages and probably chromosome crossing-over at later stages in meiosis. Probably is involved in the repair of meiotic double strand breaks (DBSs) and in homologous recombination. The polypeptide is DNA repair protein RAD51 homolog A (RAD51A) (Zea mays (Maize)).